We begin with the raw amino-acid sequence, 307 residues long: MAEISDLDRQIEQLRRCELIKESEVKALCAKAREILVEESNVQRVDSPVTVCGDIHGQFYDLKELFRVGGDVPETNYLFMGDFVDRGFYSVETFLLLLALKVRYPDRITLIRGNHESRQITQVYGFYDECLRKYGSVTVWRYCTEIFDYLSLSAIIDGKIFCVHGGLSPSIQTLDQIRTIDRKQEVPHDGPMCDLLWSDPEDTTGWGVSPRGAGYLFGSDVVAQFNAANDIDMTCRAHQLVMEGYKWHFNETVLTVWSAPNYCYRCGNVAAILELDEHLQKDFIIFEAAPQETRGIPSKKPVADYFL.

At A2 the chain carries N-acetylalanine. Residues D54, H56, D82, and N114 each contribute to the Mn(2+) site. The Proton donor role is filled by H115. H164 and H238 together coordinate Mn(2+). L307 is modified (leucine methyl ester).

This sequence belongs to the PPP phosphatase family. PP-4 (PP-X) subfamily. Serine/threonine-protein phosphatase 4 (PP4) occurs in different assemblies of the catalytic and one or more regulatory subunits. Component of the PP4 complexes PPP4C-PPP4R1, PPP4C-PPP4R2, PPP4C-PPP4R2-PPP4R3A, PPP4C-PPP4R2-PPP4R3B and PPP4C-PPP4R4. The PPP4C-PPP4R2 complex appears to be a tetramer composed of 2 molecules of PPP4C and 2 molecules of PPP4R2. Interacts with REL, NFKB1/p50 and RELA. Interacts with SMN1 and GEMIN4. Interacts with IRS4 (phosphorylated). Interacts with SMEK1/PPP4R3A; the interaction requires PP4R2. Interacts with HDAC3. Requires Mn(2+) as cofactor. Methylation at the C-terminal Leu-307 is critical for interactions with regulatory subunits and functions in DNA repair.

It localises to the cytoplasm. The protein resides in the nucleus. The protein localises to the cytoskeleton. Its subcellular location is the microtubule organizing center. It is found in the centrosome. The enzyme catalyses O-phospho-L-seryl-[protein] + H2O = L-seryl-[protein] + phosphate. The catalysed reaction is O-phospho-L-threonyl-[protein] + H2O = L-threonyl-[protein] + phosphate. Functionally, protein phosphatase that is involved in many processes such as microtubule organization at centrosomes, maturation of spliceosomal snRNPs, apoptosis, DNA repair, tumor necrosis factor (TNF)-alpha signaling, activation of c-Jun N-terminal kinase MAPK8, regulation of histone acetylation, DNA damage checkpoint signaling, NF-kappa-B activation and cell migration. The PPP4C-PPP4R1 PP4 complex may play a role in dephosphorylation and regulation of HDAC3. The PPP4C-PPP4R2-PPP4R3A PP4 complex specifically dephosphorylates H2AX phosphorylated on Ser-140 (gamma-H2AX) generated during DNA replication and required for DNA DSB repair. Dephosphorylates NDEL1 at CDK1 phosphorylation sites and negatively regulates CDK1 activity in interphase. In response to DNA damage, catalyzes RPA2 dephosphorylation, an essential step for DNA repair since it allows the efficient RPA2-mediated recruitment of RAD51 to chromatin. This Rattus norvegicus (Rat) protein is Serine/threonine-protein phosphatase 4 catalytic subunit (Ppp4c).